An 89-amino-acid chain; its full sequence is uncharacterized protein (89 aa).

2 stretches are compositionally biased toward basic residues: residues 1–17 (MPPH…HGHH) and 65–89 (HHGH…HGHH). Disordered regions lie at residues 1-25 (MPPH…ITPV) and 60-89 (LETG…HGHH).

This is an uncharacterized protein from Dictyostelium discoideum (Social amoeba).